The primary structure comprises 674 residues: Methionine--tRNA ligase (674 aa).

The 'HIGH' region signature appears at 12–22 (PYANGPIHLGH). Residues Cys143, Cys146, Cys156, and Cys159 each contribute to the Zn(2+) site. The 'KMSKS' region motif lies at 328 to 332 (KMSKS). Lys331 is an ATP binding site. Positions 573-674 (SFAKLDLRIA…EGARPGMRVK (102 aa)) constitute a tRNA-binding domain.

This sequence belongs to the class-I aminoacyl-tRNA synthetase family. MetG type 1 subfamily. Homodimer. It depends on Zn(2+) as a cofactor.

The protein resides in the cytoplasm. The catalysed reaction is tRNA(Met) + L-methionine + ATP = L-methionyl-tRNA(Met) + AMP + diphosphate. In terms of biological role, is required not only for elongation of protein synthesis but also for the initiation of all mRNA translation through initiator tRNA(fMet) aminoacylation. The sequence is that of Methionine--tRNA ligase from Nitrosococcus oceani (strain ATCC 19707 / BCRC 17464 / JCM 30415 / NCIMB 11848 / C-107).